The chain runs to 182 residues: Ribosome-recycling factor (182 aa).

It belongs to the RRF family.

It is found in the cytoplasm. Responsible for the release of ribosomes from messenger RNA at the termination of protein biosynthesis. May increase the efficiency of translation by recycling ribosomes from one round of translation to another. The sequence is that of Ribosome-recycling factor from Hydrogenobaculum sp. (strain Y04AAS1).